The following is a 444-amino-acid chain: tRNA modification GTPase MnmE (444 aa).

(6S)-5-formyl-5,6,7,8-tetrahydrofolate-binding residues include R23, E82, and K121. The 150-residue stretch at 216–365 (GTSIVLAGLP…LKQALQKWLN (150 aa)) folds into the TrmE-type G domain. Residue N226 coordinates K(+). GTP-binding positions include 226–231 (NAGKSS), 245–251 (TDIPGTT), and 270–273 (DSAG). S230 lines the Mg(2+) pocket. Positions 245, 247, and 250 each coordinate K(+). T251 contacts Mg(2+). Residue K444 participates in (6S)-5-formyl-5,6,7,8-tetrahydrofolate binding.

This sequence belongs to the TRAFAC class TrmE-Era-EngA-EngB-Septin-like GTPase superfamily. TrmE GTPase family. As to quaternary structure, homodimer. Heterotetramer of two MnmE and two MnmG subunits. K(+) is required as a cofactor.

It is found in the cytoplasm. Functionally, exhibits a very high intrinsic GTPase hydrolysis rate. Involved in the addition of a carboxymethylaminomethyl (cmnm) group at the wobble position (U34) of certain tRNAs, forming tRNA-cmnm(5)s(2)U34. The sequence is that of tRNA modification GTPase MnmE from Chlamydia trachomatis serovar A (strain ATCC VR-571B / DSM 19440 / HAR-13).